A 513-amino-acid polypeptide reads, in one-letter code: Galactose-1-phosphate uridylyltransferase (513 aa).

The protein belongs to the galactose-1-phosphate uridylyltransferase type 2 family.

The protein resides in the cytoplasm. It catalyses the reaction alpha-D-galactose 1-phosphate + UDP-alpha-D-glucose = alpha-D-glucose 1-phosphate + UDP-alpha-D-galactose. It functions in the pathway carbohydrate metabolism; galactose metabolism. This chain is Galactose-1-phosphate uridylyltransferase (galT), found in Bacillus subtilis (strain 168).